A 151-amino-acid polypeptide reads, in one-letter code: Neuroglobin (151 aa).

Residues 1–149 (MERPESELIR…VVQAMSRGWD (149 aa)) form the Globin domain. Residues His64 and His96 each coordinate heme b.

This sequence belongs to the globin family. As to quaternary structure, monomer. Homodimer and homotetramer; disulfide-linked. Mainly monomeric but also detected as part of homodimers and homotetramers. Interacts with 14-3-3 proteins; regulates the phosphorylation of NGB. Could interact (ferrous form) with G-alpha(i) proteins (GTP-bound form). Phosphorylated during hypoxia by ERK1/ERK2. Phosphorylation regulates the heme pocket hexacoordination preventing the association of His-64 with the heme metal center. Thereby, promotes the access of dioxygen and nitrite to the heme and stimulates the nitrite reductase activity. Phosphorylation during hypoxia is stabilized by 14-3-3 proteins. As to expression, widely distributed throughout the adult brain, including cerebral cortex, hippocampus, thalamus, hypothalamus, olfactory bulb, and cerebellum.

The protein localises to the cytoplasm. Its subcellular location is the cytosol. It is found in the mitochondrion matrix. The enzyme catalyses Fe(III)-heme b-[protein] + nitric oxide + H2O = Fe(II)-heme b-[protein] + nitrite + 2 H(+). Its function is as follows. Monomeric globin with a bis-histidyl six-coordinate heme-iron atom through which it can bind dioxygen, carbon monoxide and nitric oxide. Could help transport oxygen and increase its availability to the metabolically active neuronal tissues, though its low quantity in tissues as well as its high affinity for dioxygen, which may limit its oxygen-releasing ability, argue against it. The ferrous/deoxygenated form exhibits a nitrite reductase activity and it could produce nitric oxide which in turn inhibits cellular respiration in response to hypoxia. In its ferrous/deoxygenated state, it may also exhibit GDI (Guanine nucleotide Dissociation Inhibitor) activity toward heterotrimeric G-alpha proteins, thereby regulating signal transduction to facilitate neuroprotective responses in the wake of hypoxia and associated oxidative stress. This is Neuroglobin from Rattus norvegicus (Rat).